The chain runs to 216 residues: Ras-like protein (216 aa).

Residue 16–23 (GGGGVGKS) participates in GTP binding. The Effector region signature appears at 38 to 46 (YDPTIEDSY). Residues 63–67 (DTAGQ) and 122–125 (NKCD) each bind GTP. 2 S-palmitoyl cysteine lipidation sites follow: C209 and C210. C213 is modified (cysteine methyl ester). C213 carries S-geranylgeranyl cysteine lipidation. Positions 214-216 (VVL) are cleaved as a propeptide — removed in mature form.

Belongs to the small GTPase superfamily. Ras family.

The protein localises to the cell membrane. It catalyses the reaction GTP + H2O = GDP + phosphate + H(+). With respect to regulation, alternates between an inactive form bound to GDP and an active form bound to GTP. Activated by a guanine nucleotide-exchange factor (GEF) and inactivated by a GTPase-activating protein (GAP). The polypeptide is Ras-like protein (RAS1) (Cryptococcus neoformans var. neoformans serotype D (strain B-3501A) (Filobasidiella neoformans)).